Consider the following 130-residue polypeptide: Histone H2B.1 (130 aa).

Residues Met1–Pro19 show a composition bias toward basic and acidic residues. The disordered stretch occupies residues Met1 to Glu39. Lys7 and Lys8 each carry N6-acetyllysine; alternate. Glycyl lysine isopeptide (Lys-Gly) (interchain with G-Cter in SUMO); alternate cross-links involve residues Lys7 and Lys8. Ser11 is modified (phosphoserine). At Lys12 the chain carries N6-acetyllysine. The residue at position 17 (Lys17) is an N6-acetyllysine; alternate. A Glycyl lysine isopeptide (Lys-Gly) (interchain with G-Cter in SUMO); alternate cross-link involves residue Lys17. Lys18 participates in a covalent cross-link: Glycyl lysine isopeptide (Lys-Gly) (interchain with G-Cter in SUMO). A Glycyl lysine isopeptide (Lys-Gly) (interchain with G-Cter in ubiquitin) cross-link involves residue Lys124.

It belongs to the histone H2B family. The nucleosome is a histone octamer containing two molecules each of H2A, H2B, H3 and H4 assembled in one H3-H4 heterotetramer and two H2A-H2B heterodimers. The octamer wraps approximately 147 bp of DNA. Monoubiquitinated by the UBC2-BRE1 complex to form H2BK123ub1. H2BK123ub1 gives a specific tag for epigenetic transcriptional activation and is also prerequisite for H3K4me and H3K79me formation. H2BK123ub1 also modulates the formation of double-strand breaks during meiosis and is a prerequisite for DNA-damage checkpoint activation. Post-translationally, phosphorylated by STE20 to form H2BS10ph during progression through meiotic prophase. May be correlated with chromosome condensation. In terms of processing, acetylated by GCN5 to form H2BK11ac and H2BK16ac. H2BK16ac can also be formed by ESA1. Acetylation of N-terminal lysines and particularly formation of H2BK11acK16ac has a positive effect on transcription. Sumoylation to form H2BK6su or H2BK7su, and probably also H2BK16su or H2BK17su, occurs preferentially near the telomeres and represses gene transcription.

It is found in the nucleus. It localises to the chromosome. In terms of biological role, core component of nucleosome. Nucleosomes wrap and compact DNA into chromatin, limiting DNA accessibility to the cellular machineries which require DNA as a template. Histones thereby play a central role in transcription regulation, DNA repair, DNA replication and chromosomal stability. DNA accessibility is regulated via a complex set of post-translational modifications of histones, also called histone code, and nucleosome remodeling. This is Histone H2B.1 (HTB1) from Debaryomyces hansenii (strain ATCC 36239 / CBS 767 / BCRC 21394 / JCM 1990 / NBRC 0083 / IGC 2968) (Yeast).